We begin with the raw amino-acid sequence, 362 residues long: MDRAALLGLSRLCALWAAVLALFPCGAQGNWMWLGIASFGVPEKLGCANLPLNSRQKELCKRKPYLLPSIREGARLGIQECRSQFRHERWNCLVAAASAPGTSPLFGYELSSGTKETAFIYAVMAAGLVHSVTRSCSAGNMTECSCDTTLQNGGSSSEGWHWGGCSDDVQYGMWFSRKFLDFPIKNTTAKESKVLLAMNLHNNEAGRQAVAKLMSLDCRCHGVSGSCAVKTCWKTMSSFEKIGHLLKDKYENSVQISDKIKRKMHRREKDQRKIPIRKDDLLYVNKSPNYCVEDKKLGIPGTQGRECNRTSEGADGCNLLCCGRGYNTHVVRHVERCECKFIWCCYVRCRRCESMTDVHTCK.

Residues 1–29 (MDRAALLGLSRLCALWAAVLALFPCGAQG) form the signal peptide. Disulfide bonds link C81–C92, C136–C144, and C146–C165. N-linked (GlcNAc...) asparagine glycosylation occurs at N140. The N-linked (GlcNAc...) asparagine glycan is linked to N186. Cystine bridges form between C218–C232, C220–C227, C291–C322, C307–C317, C321–C361, C337–C352, C339–C349, and C344–C345. Residue S224 is the site of O-palmitoleoyl serine; by PORCN attachment. A glycan (N-linked (GlcNAc...) asparagine) is linked at N308.

The protein belongs to the Wnt family. Post-translationally, palmitoleoylation is required for efficient binding to frizzled receptors. Depalmitoleoylation leads to Wnt signaling pathway inhibition.

It localises to the secreted. The protein localises to the extracellular space. The protein resides in the extracellular matrix. In terms of biological role, ligand for members of the frizzled family of seven transmembrane receptors. Probable developmental protein. May be a signaling molecule which affects the development of discrete regions of tissues. Is likely to signal over only few cell diameters. The protein is Protein Wnt-16 (WNT16) of Bos taurus (Bovine).